The following is a 306-amino-acid chain: Anamorsin (306 aa).

The N-terminal SAM-like domain stretch occupies residues 6–172 (IAPGQRVAVI…KPNFEVGSSS (167 aa)). Residues 173–224 (QLKLSFAKKTSPSGKPSVDPATAKLWTLSASDMNDEEMDLLDSDELLDSEDL) are linker. The [2Fe-2S] cluster site is built by Cys237, Cys246, Cys249, and Cys251. A fe-S binding site A region spans residues 237 to 251 (CKEKGKKKACKNCTC). Residues Cys270, Cys273, Cys281, and Cys284 each coordinate [4Fe-4S] cluster. 2 consecutive short sequence motifs (cx2C motif) follow at residues 270–273 (CGNC) and 281–284 (CASC). The segment at 270–284 (CGNCYLGDAFRCASC) is fe-S binding site B.

Belongs to the anamorsin family. As to quaternary structure, monomer. Interacts with NDOR1. Interacts with CHCHD4. Requires [2Fe-2S] cluster as cofactor. [4Fe-4S] cluster is required as a cofactor.

The protein localises to the cytoplasm. It is found in the nucleus. Its subcellular location is the mitochondrion intermembrane space. In terms of biological role, component of the cytosolic iron-sulfur (Fe-S) protein assembly (CIA) machinery required for the maturation of extramitochondrial Fe-S proteins. Part of an electron transfer chain functioning in an early step of cytosolic Fe-S biogenesis, facilitating the de novo assembly of a [4Fe-4S] cluster on the scaffold complex NUBP1-NUBP2. Electrons are transferred to CIAPIN1 from NADPH via the FAD- and FMN-containing protein NDOR1. NDOR1-CIAPIN1 are also required for the assembly of the diferric tyrosyl radical cofactor of ribonucleotide reductase (RNR), probably by providing electrons for reduction during radical cofactor maturation in the catalytic small subunit. Has anti-apoptotic effects in the cell. Involved in negative control of cell death upon cytokine withdrawal. Promotes development of hematopoietic cells. The chain is Anamorsin from Gallus gallus (Chicken).